Here is a 589-residue protein sequence, read N- to C-terminus: Sulfite reductase [NADPH] hemoprotein beta-component (589 aa).

Positions 443, 449, 488, and 492 each coordinate [4Fe-4S] cluster. Residue C492 participates in siroheme binding.

The protein belongs to the nitrite and sulfite reductase 4Fe-4S domain family. Alpha(8)-beta(8). The alpha component is a flavoprotein, the beta component is a hemoprotein. It depends on siroheme as a cofactor. The cofactor is [4Fe-4S] cluster.

It catalyses the reaction hydrogen sulfide + 3 NADP(+) + 3 H2O = sulfite + 3 NADPH + 4 H(+). It functions in the pathway sulfur metabolism; hydrogen sulfide biosynthesis; hydrogen sulfide from sulfite (NADPH route): step 1/1. Its function is as follows. Component of the sulfite reductase complex that catalyzes the 6-electron reduction of sulfite to sulfide. This is one of several activities required for the biosynthesis of L-cysteine from sulfate. The polypeptide is Sulfite reductase [NADPH] hemoprotein beta-component (Neisseria meningitidis serogroup C (strain 053442)).